The following is a 142-amino-acid chain: Hemoglobin subunit alpha-A (142 aa).

Residues 2–142 form the Globin domain; sequence VLSAADKTNV…VGTVLTAKYR (141 aa). Residue His59 participates in O2 binding. Residue His88 coordinates heme b.

Belongs to the globin family. As to quaternary structure, heterotetramer of two alpha chains and two beta chains. As to expression, red blood cells.

Functionally, involved in oxygen transport from the lung to the various peripheral tissues. The chain is Hemoglobin subunit alpha-A (HBAA) from Coturnix japonica (Japanese quail).